We begin with the raw amino-acid sequence, 263 residues long: Oxidoreductase UcpA (263 aa).

10–32 (LITGALQGIGEGIARTFARHGAN) provides a ligand contact to NAD(+). Position 141 (Ser141) interacts with substrate. The Proton acceptor role is filled by Tyr155.

This sequence belongs to the short-chain dehydrogenases/reductases (SDR) family.

The protein is Oxidoreductase UcpA (ucpA) of Escherichia coli (strain K12).